Reading from the N-terminus, the 236-residue chain is Large ribosomal subunit protein uL2 (236 aa).

The segment covering 1–10 (MGHRITTQSR) has biased composition (polar residues). Disordered regions lie at residues 1–20 (MGHR…YRAP) and 202–236 (GGGG…TGRR). A compositionally biased stretch (basic residues) spans 224–236 (KVGHIAARRTGRR).

It belongs to the universal ribosomal protein uL2 family. Part of the 50S ribosomal subunit. Forms a bridge to the 30S subunit in the 70S ribosome.

One of the primary rRNA binding proteins. Required for association of the 30S and 50S subunits to form the 70S ribosome, for tRNA binding and peptide bond formation. It has been suggested to have peptidyltransferase activity; this is somewhat controversial. Makes several contacts with the 16S rRNA in the 70S ribosome. This chain is Large ribosomal subunit protein uL2, found in Methanospirillum hungatei JF-1 (strain ATCC 27890 / DSM 864 / NBRC 100397 / JF-1).